Consider the following 173-residue polypeptide: Putative phosphoesterase GTNG_0743 (173 aa).

H34 functions as the Proton donor in the catalytic mechanism. Short sequence motifs (HXTX) lie at residues 34-37 and 115-118; these read HITL and HITI. The Proton acceptor role is filled by H115.

This sequence belongs to the 2H phosphoesterase superfamily. YjcG family.

The protein is Putative phosphoesterase GTNG_0743 of Geobacillus thermodenitrificans (strain NG80-2).